The primary structure comprises 399 residues: Carbamoyl phosphate synthase small chain (399 aa).

The segment at 1–204 (MTKTTLSSDP…WNKGYTINNE (204 aa)) is CPSase. L-glutamine is bound by residues serine 60, glycine 256, and glycine 258. Residues 208-396 (HIVAIDYGIK…HDLIVNYREQ (189 aa)) enclose the Glutamine amidotransferase type-1 domain. Residue cysteine 285 is the Nucleophile of the active site. Positions 286, 289, 327, 329, and 330 each coordinate L-glutamine. Catalysis depends on residues histidine 369 and glutamate 371.

Belongs to the CarA family. Composed of two chains; the small (or glutamine) chain promotes the hydrolysis of glutamine to ammonia, which is used by the large (or ammonia) chain to synthesize carbamoyl phosphate. Tetramer of heterodimers (alpha,beta)4.

The enzyme catalyses hydrogencarbonate + L-glutamine + 2 ATP + H2O = carbamoyl phosphate + L-glutamate + 2 ADP + phosphate + 2 H(+). The catalysed reaction is L-glutamine + H2O = L-glutamate + NH4(+). Its pathway is amino-acid biosynthesis; L-arginine biosynthesis; carbamoyl phosphate from bicarbonate: step 1/1. The protein operates within pyrimidine metabolism; UMP biosynthesis via de novo pathway; (S)-dihydroorotate from bicarbonate: step 1/3. Small subunit of the glutamine-dependent carbamoyl phosphate synthetase (CPSase). CPSase catalyzes the formation of carbamoyl phosphate from the ammonia moiety of glutamine, carbonate, and phosphate donated by ATP, constituting the first step of 2 biosynthetic pathways, one leading to arginine and/or urea and the other to pyrimidine nucleotides. The small subunit (glutamine amidotransferase) binds and cleaves glutamine to supply the large subunit with the substrate ammonia. This is Carbamoyl phosphate synthase small chain from Bartonella bacilliformis (strain ATCC 35685 / KC583 / Herrer 020/F12,63).